A 147-amino-acid polypeptide reads, in one-letter code: Leghemoglobin (147 aa).

In terms of domain architecture, Globin spans 2–147 (GFTADQEALV…LASAIKKAMS (146 aa)). Nitrated tyrosine occurs at positions 25 and 30. Ser45 is a binding site for heme b. Ser45 is subject to Phosphoserine. His62 provides a ligand contact to O2. The heme b site is built by Lys65, His94, and Lys97. Residue Tyr135 is modified to Nitrated tyrosine.

It belongs to the plant globin family. As to quaternary structure, monomer. Post-translationally, nitrated in effective nodules and particularly in hypoxic conditions; this mechanism may play a protective role in the symbiosis by buffering toxic peroxynitrite NO(2)(-). Nitration level decrease during nodule senescence. In terms of processing, phosphorylation at Ser-45 disrupts the molecular environment of its porphyrin ring oxygen binding pocket, thus leading to a reduced oxygen consumption and to the delivery of oxygen O(2) to symbiosomes. In terms of tissue distribution, root nodules.

It localises to the cytoplasm. The protein resides in the cytosol. The protein localises to the nucleus. In terms of biological role, leghemoglobin that reversibly binds oxygen O(2) through a pentacoordinated heme iron. In root nodules, facilitates the diffusion of oxygen to the bacteroids while preventing the bacterial nitrogenase from being inactivated by buffering dioxygen, nitric oxide and carbon monoxide, and promoting the formation of reactive oxygen species (ROS, e.g. H(2)O(2)). This role is essential for symbiotic nitrogen fixation (SNF). This Medicago sativa (Alfalfa) protein is Leghemoglobin (LB3).